Consider the following 142-residue polypeptide: Hemoglobin subunit alpha (142 aa).

Positions valine 2–arginine 142 constitute a Globin domain. A Phosphoserine modification is found at serine 4. An N6-succinyllysine mark is found at lysine 8 and lysine 12. N6-acetyllysine; alternate is present on lysine 17. An N6-succinyllysine; alternate modification is found at lysine 17. Tyrosine 25 carries the post-translational modification Phosphotyrosine. At serine 36 the chain carries Phosphoserine. Lysine 41 carries the post-translational modification N6-succinyllysine. Serine 50 is modified (phosphoserine). Histidine 59 lines the O2 pocket. Histidine 88 is a heme b binding site. Residue threonine 109 is modified to Phosphothreonine. Phosphoserine occurs at positions 125 and 132. Residues threonine 135 and threonine 138 each carry the phosphothreonine modification. Position 139 is a phosphoserine (serine 139).

Belongs to the globin family. In terms of assembly, heterotetramer of two alpha chains and two beta chains. In terms of tissue distribution, red blood cells.

Involved in oxygen transport from the lung to the various peripheral tissues. Its function is as follows. Hemopressin acts as an antagonist peptide of the cannabinoid receptor CNR1. Hemopressin-binding efficiently blocks cannabinoid receptor CNR1 and subsequent signaling. In Cavia porcellus (Guinea pig), this protein is Hemoglobin subunit alpha (HBA).